Here is a 64-residue protein sequence, read N- to C-terminus: DNA gyrase inhibitor YacG (64 aa).

Zn(2+) is bound by residues Cys-9, Cys-12, Cys-28, and Cys-32. Residues 45–64 form a disordered region; sequence KRIPSSGDLSESDDWSEEPK. A compositionally biased stretch (acidic residues) spans 54 to 64; that stretch reads SESDDWSEEPK.

Belongs to the DNA gyrase inhibitor YacG family. In terms of assembly, interacts with GyrB. Zn(2+) serves as cofactor.

Functionally, inhibits all the catalytic activities of DNA gyrase by preventing its interaction with DNA. Acts by binding directly to the C-terminal domain of GyrB, which probably disrupts DNA binding by the gyrase. The chain is DNA gyrase inhibitor YacG from Escherichia fergusonii (strain ATCC 35469 / DSM 13698 / CCUG 18766 / IAM 14443 / JCM 21226 / LMG 7866 / NBRC 102419 / NCTC 12128 / CDC 0568-73).